The primary structure comprises 306 residues: Bifunctional protein FolD 1 (306 aa).

Residues 168-170 (GRS), S193, and I234 contribute to the NADP(+) site.

This sequence belongs to the tetrahydrofolate dehydrogenase/cyclohydrolase family. In terms of assembly, homodimer.

The catalysed reaction is (6R)-5,10-methylene-5,6,7,8-tetrahydrofolate + NADP(+) = (6R)-5,10-methenyltetrahydrofolate + NADPH. The enzyme catalyses (6R)-5,10-methenyltetrahydrofolate + H2O = (6R)-10-formyltetrahydrofolate + H(+). It participates in one-carbon metabolism; tetrahydrofolate interconversion. Catalyzes the oxidation of 5,10-methylenetetrahydrofolate to 5,10-methenyltetrahydrofolate and then the hydrolysis of 5,10-methenyltetrahydrofolate to 10-formyltetrahydrofolate. In Rhizobium meliloti (strain 1021) (Ensifer meliloti), this protein is Bifunctional protein FolD 1.